The primary structure comprises 404 residues: Formate-dependent phosphoribosylglycinamide formyltransferase (404 aa).

Residues 25–26 (EL) and Glu-85 each bind N(1)-(5-phospho-beta-D-ribosyl)glycinamide. ATP-binding positions include Arg-118, Lys-159, 164 to 169 (SSGKGQ), 199 to 202 (EGFI), and Glu-207. Residues 123 to 318 (RLAAEELGLP…EFELHARAIL (196 aa)) enclose the ATP-grasp domain. Mg(2+)-binding residues include Glu-277 and Glu-289. Residues Asp-296, Lys-365, and 372-373 (RR) each bind N(1)-(5-phospho-beta-D-ribosyl)glycinamide.

This sequence belongs to the PurK/PurT family. As to quaternary structure, homodimer.

The enzyme catalyses N(1)-(5-phospho-beta-D-ribosyl)glycinamide + formate + ATP = N(2)-formyl-N(1)-(5-phospho-beta-D-ribosyl)glycinamide + ADP + phosphate + H(+). It participates in purine metabolism; IMP biosynthesis via de novo pathway; N(2)-formyl-N(1)-(5-phospho-D-ribosyl)glycinamide from N(1)-(5-phospho-D-ribosyl)glycinamide (formate route): step 1/1. Its function is as follows. Involved in the de novo purine biosynthesis. Catalyzes the transfer of formate to 5-phospho-ribosyl-glycinamide (GAR), producing 5-phospho-ribosyl-N-formylglycinamide (FGAR). Formate is provided by PurU via hydrolysis of 10-formyl-tetrahydrofolate. This chain is Formate-dependent phosphoribosylglycinamide formyltransferase, found in Burkholderia lata (strain ATCC 17760 / DSM 23089 / LMG 22485 / NCIMB 9086 / R18194 / 383).